A 460-amino-acid chain; its full sequence is Muscarinic acetylcholine receptor M1 (460 aa).

Residues 1-22 are Extracellular-facing; sequence MNTSAPPAVSPNITVLAPGKGP. Residues asparagine 2 and asparagine 12 are each glycosylated (N-linked (GlcNAc...) asparagine). A helical transmembrane segment spans residues 23-48; sequence WQVAFIGITTGLLSLATVTGNLLVLI. Over 49–62 the chain is Cytoplasmic; sequence SFKVNTELKTVNNY. The helical transmembrane segment at 63 to 84 threads the bilayer; sequence FLLSLACADLIIGTFSMNLYTT. Topologically, residues 85-95 are extracellular; it reads YLLMGHWALGT. A helical membrane pass occupies residues 96–121; that stretch reads LACDLWLALDYVASNASVMNLLLISF. Cysteine 98 and cysteine 178 form a disulfide bridge. Residues 122 to 142 are Cytoplasmic-facing; it reads DRYFSVTRPLSYRAKRTPRRA. A helical transmembrane segment spans residues 143 to 164; that stretch reads ALMIGLAWLVSFVLWAPAILFW. Topologically, residues 165-185 are extracellular; that stretch reads QYLVGERTVLAGQCYIQFLSQ. The chain crosses the membrane as a helical span at residues 186–209; it reads PIITFGTAMAAFYLPVTVMCTLYW. The Cytoplasmic portion of the chain corresponds to 210 to 366; sequence RIYRETENRA…LVKEKKAART (157 aa). 3 disordered regions span residues 225 to 256, 274 to 296, and 310 to 351; these read LQGS…ETPP, WKEE…GEEP, and EAQA…QLAK. Threonine 230 carries the phosphothreonine modification. Residues 238-247 show a composition bias toward low complexity; that stretch reads SSSSERSQPG. The segment covering 328–343 has biased composition (basic residues); that stretch reads RPTRKGRERAGKGQKP. Residues 367–390 traverse the membrane as a helical segment; the sequence is LSAILLAFIVTWTPYNIMVLVSTF. Residues 391-397 are Extracellular-facing; sequence CKDCVPE. Residues 398–420 traverse the membrane as a helical segment; that stretch reads TLWELGYWLCYVNSTINPMCYAL. At 421-460 the chain is on the cytoplasmic side; sequence CNKAFRDTFRLLLLCRWDKRRWRKIPKRPGSVHRTPSRQC. Phosphothreonine is present on threonine 428. Serine 451 bears the Phosphoserine mark. Residue threonine 455 is modified to Phosphothreonine. Serine 457 carries the phosphoserine modification.

The protein belongs to the G-protein coupled receptor 1 family. Muscarinic acetylcholine receptor subfamily. CHRM1 sub-subfamily. In terms of assembly, interacts with GPRASP2. Interacts with TMEM147.

The protein localises to the cell membrane. It localises to the postsynaptic cell membrane. Functionally, the muscarinic acetylcholine receptor mediates various cellular responses, including inhibition of adenylate cyclase, breakdown of phosphoinositides and modulation of potassium channels through the action of G proteins. Primary transducing effect is Pi turnover. The chain is Muscarinic acetylcholine receptor M1 (CHRM1) from Sus scrofa (Pig).